A 67-amino-acid polypeptide reads, in one-letter code: Medusin-S1 (67 aa).

The first 22 residues, 1–22 (MSFLKKSLFLVLFLGFVSLSIC), serve as a signal peptide directing secretion. Residues 23–48 (EEEKRETEEKENEQEDDREERSEEKR) constitute a propeptide that is removed on maturation. The disordered stretch occupies residues 26-47 (KRETEEKENEQEDDREERSEEK). Residues 31-40 (EKENEQEDDR) are compositionally biased toward acidic residues. At Leu-66 the chain carries Leucine amide.

Belongs to the frog skin active peptide (FSAP) family. Medusin subfamily. In terms of tissue distribution, expressed by the skin glands.

The protein resides in the secreted. The protein localises to the target cell membrane. Antibacterial peptide with moderate activity against the Gram-positive bacteria (S.aureus ATCC 25923, MIC=25 uM), but not against all other bacteria (both Gram-positive and Gram-negative) tested. Does not show activity against fungi, and against Leishmania species. It adopts an alpha-helical structure with very low amphipathicity in membrane environments. The chain is Medusin-S1 from Phyllomedusa sauvagei (Sauvage's leaf frog).